Consider the following 150-residue polypeptide: uncharacterized protein (150 aa).

The next 3 helical transmembrane spans lie at 50 to 70 (VVSV…VIHL), 80 to 100 (LYIT…QLWL), and 127 to 147 (KVVI…FFIE).

The protein localises to the membrane. This is an uncharacterized protein from Schizosaccharomyces pombe (strain 972 / ATCC 24843) (Fission yeast).